We begin with the raw amino-acid sequence, 395 residues long: Altered inheritance of mitochondria protein 39, mitochondrial (395 aa).

Residues 161–181 (IFGGIFGVIIGYSLIYKVIYL) traverse the membrane as a helical segment.

The protein belongs to the AIM39 family.

The protein localises to the mitochondrion membrane. This Saccharomyces cerevisiae (strain YJM789) (Baker's yeast) protein is Altered inheritance of mitochondria protein 39, mitochondrial (AIM39).